A 525-amino-acid chain; its full sequence is NGFI-A-binding protein 2 (525 aa).

Positions 1-22 (MHRAPSPTAEQPPGGGDSARRT) are disordered. Ser-6 carries the post-translational modification Phosphoserine. Residues 35-113 (ALPRTLGELQ…REWATNPGLF (79 aa)) form an NCD1 region. The interval 135–237 (GTRKGSMSNG…GGTGGGPDRL (103 aa)) is disordered. Phosphoserine occurs at positions 157, 159, 162, and 171. Residues 212–234 (AGGGVPEGTGAGGLAAGGTGGGP) are compositionally biased toward gly residues. The tract at residues 267-356 (LLKLNKKLAR…SRQVARESTY (90 aa)) is NCD2. The segment at 353 to 384 (ESTYLSSLKGSRLHPEELGGPPLKKLKQEVGE) is necessary for nuclear localization. Lys-379 participates in a covalent cross-link: Glycyl lysine isopeptide (Lys-Gly) (interchain with G-Cter in SUMO1). A disordered region spans residues 380 to 416 (QEVGEQSHPEIQQPPPGPESYVPPYRPSLEEDSASLS). Ser-479 is subject to Phosphoserine. Residues 502 to 525 (PGPHPALVEGRRSSVKVEAEASRQ) are disordered. A compositionally biased stretch (basic and acidic residues) spans 510 to 525 (EGRRSSVKVEAEASRQ). Lys-517 participates in a covalent cross-link: Glycyl lysine isopeptide (Lys-Gly) (interchain with G-Cter in SUMO1); alternate. Lys-517 participates in a covalent cross-link: Glycyl lysine isopeptide (Lys-Gly) (interchain with G-Cter in SUMO2); alternate.

Belongs to the NAB family. Homomultimers may associate with EGR1 bound to DNA. Sumoylation by EGR2 represses EGR2 transcriptional activity in hindbrain. Widely expressed at low levels. Highly expressed in melanoma cell lines.

The protein localises to the nucleus. Acts as a transcriptional repressor for zinc finger transcription factors EGR1 and EGR2. Isoform 2 lacks repression ability. This chain is NGFI-A-binding protein 2 (NAB2), found in Homo sapiens (Human).